The sequence spans 396 residues: 1-deoxy-D-xylulose 5-phosphate reductoisomerase (396 aa).

NADPH is bound by residues Thr10, Gly11, Ser12, Ile13, Asn38, and Asn123. Lys124 lines the 1-deoxy-D-xylulose 5-phosphate pocket. Glu125 contacts NADPH. Asp149 provides a ligand contact to Mn(2+). Residues Ser150, Glu151, Ser185, and His208 each contribute to the 1-deoxy-D-xylulose 5-phosphate site. Mn(2+) is bound at residue Glu151. Gly214 contributes to the NADPH binding site. Residues Ser221, Asn226, Lys227, and Glu230 each contribute to the 1-deoxy-D-xylulose 5-phosphate site. Glu230 is a Mn(2+) binding site.

This sequence belongs to the DXR family. The cofactor is Mg(2+). Mn(2+) serves as cofactor.

It carries out the reaction 2-C-methyl-D-erythritol 4-phosphate + NADP(+) = 1-deoxy-D-xylulose 5-phosphate + NADPH + H(+). The protein operates within isoprenoid biosynthesis; isopentenyl diphosphate biosynthesis via DXP pathway; isopentenyl diphosphate from 1-deoxy-D-xylulose 5-phosphate: step 1/6. Its function is as follows. Catalyzes the NADPH-dependent rearrangement and reduction of 1-deoxy-D-xylulose-5-phosphate (DXP) to 2-C-methyl-D-erythritol 4-phosphate (MEP). The protein is 1-deoxy-D-xylulose 5-phosphate reductoisomerase of Shewanella halifaxensis (strain HAW-EB4).